Here is a 380-residue protein sequence, read N- to C-terminus: Endonuclease III homolog 2 (380 aa).

Positions 8–12 (RKRKH) match the Nuclear localization signal motif. An interaction with MLH1 region spans residues 15–40 (VDIEEVEVRSKYFKKNERTVELVKEN). Residue lysine 194 forms a Glycyl lysine isopeptide (Lys-Gly) (interchain with G-Cter in SUMO) linkage. The region spanning 228 to 252 (FDSDIPYDIEGILSLPGVGPKMGYL) is the HhH domain. Catalysis depends on lysine 248, which acts as the Nucleophile; for N-glycosylase activity. Residues cysteine 319, cysteine 326, cysteine 329, and cysteine 335 each coordinate [4Fe-4S] cluster. Positions 376-380 (RHKKK) match the Nuclear localization signal motif.

The protein belongs to the Nth/MutY family. As to quaternary structure, interacts with MLH1. It depends on [4Fe-4S] cluster as a cofactor. Monosumoylated.

It is found in the nucleus. It carries out the reaction 2'-deoxyribonucleotide-(2'-deoxyribose 5'-phosphate)-2'-deoxyribonucleotide-DNA = a 3'-end 2'-deoxyribonucleotide-(2,3-dehydro-2,3-deoxyribose 5'-phosphate)-DNA + a 5'-end 5'-phospho-2'-deoxyribonucleoside-DNA + H(+). In terms of biological role, bifunctional DNA N-glycosylase with associated apurinic/apyrimidinic (AP) lyase function that catalyzes the first step in base excision repair (BER), the primary repair pathway for the repair of oxidative DNA damage. The DNA N-glycosylase activity releases the damaged DNA base from DNA by cleaving the N-glycosidic bond, leaving an AP site. The AP-lyase activity cleaves the phosphodiester bond 3' to the AP site by a beta-elimination. Primarily recognizes and repairs oxidative base damage of pyrimidines, but also purine-derived lesions, alkylation damage as well as abasic sites. Can also repair the oxidation products of 8-oxoguanine. This is Endonuclease III homolog 2 (NTG2) from Saccharomyces cerevisiae (strain ATCC 204508 / S288c) (Baker's yeast).